Consider the following 185-residue polypeptide: Elongation factor P (185 aa).

This sequence belongs to the elongation factor P family.

It localises to the cytoplasm. The protein operates within protein biosynthesis; polypeptide chain elongation. Involved in peptide bond synthesis. Stimulates efficient translation and peptide-bond synthesis on native or reconstituted 70S ribosomes in vitro. Probably functions indirectly by altering the affinity of the ribosome for aminoacyl-tRNA, thus increasing their reactivity as acceptors for peptidyl transferase. This chain is Elongation factor P, found in Aromatoleum aromaticum (strain DSM 19018 / LMG 30748 / EbN1) (Azoarcus sp. (strain EbN1)).